The primary structure comprises 146 residues: Large ribosomal subunit protein uL15 (146 aa).

Residues 1–13 (MKLNELHPSEGSR) show a composition bias toward basic and acidic residues. Positions 1-56 (MKLNELHPSEGSRHARKRVGRGTSSGFGKTSGRGQKGQHARSGGNTRLGFEGGQMP) are disordered. The segment covering 23-35 (TSSGFGKTSGRGQ) has biased composition (gly residues).

The protein belongs to the universal ribosomal protein uL15 family. In terms of assembly, part of the 50S ribosomal subunit.

In terms of biological role, binds to the 23S rRNA. The sequence is that of Large ribosomal subunit protein uL15 from Lactobacillus delbrueckii subsp. bulgaricus (strain ATCC 11842 / DSM 20081 / BCRC 10696 / JCM 1002 / NBRC 13953 / NCIMB 11778 / NCTC 12712 / WDCM 00102 / Lb 14).